The following is a 420-amino-acid chain: Subtilisin (420 aa).

An N-terminal signal peptide occupies residues 1–31 (MKRSGKIFTTAMLAVTLMMPAMGVSANEGNA). The propeptide occupies 32 to 111 (AAEGNEKFRV…DKPEALYNAM (80 aa)). Glutamine 115 serves as a coordination point for Ca(2+). A Peptidase S8 domain is found at 118–420 (PWGIKAIYNN…ASGFGFATVQ (303 aa)). Aspartate 145 (charge relay system) is an active-site residue. Aspartate 154 serves as a coordination point for Ca(2+). Active-site charge relay system residues include histidine 182 and serine 360.

Belongs to the peptidase S8 family. Ca(2+) is required as a cofactor.

It is found in the secreted. It carries out the reaction Hydrolysis of proteins with broad specificity for peptide bonds, and a preference for a large uncharged residue in P1. Hydrolyzes peptide amides.. Subtilisin is an extracellular alkaline serine protease, it catalyzes the hydrolysis of proteins and peptide amides. The polypeptide is Subtilisin (sub1) (Bacillus sp. (strain TA39)).